The sequence spans 522 residues: Anti-sigma-I factor RsgI4 (522 aa).

The Cytoplasmic segment spans residues 1-51; the sequence is MNLGVVIKIKRKKAIIVTETGEFKAVNARNGMFLGQKILFDQQDVIENNRN. Residues 2–49 form the RsgI N-terminal anti-sigma domain; sequence NLGVVIKIKRKKAIIVTETGEFKAVNARNGMFLGQKILFDQQDVIENN. The chain crosses the membrane as a helical span at residues 52 to 72; sequence GIGLAYSAAIAGMVAVFVFMF. Residues 73-522 are Extracellular-facing; that stretch reads TYFGLHNFNG…SGILKWGREP (450 aa). Over residues 311–361 the composition is skewed to low complexity; the sequence is SAKTPERATTVPVNTPVKPTDAPTKSPATATATATRAPVKATATPAKTLKP. The segment at 311-371 is disordered; it reads SAKTPERATT…SDTPVKTPDG (61 aa). The CBM3 domain occupies 371 to 522; the sequence is GEQSVKVRFY…SGILKWGREP (152 aa).

As to quaternary structure, interacts (via RsgI N-terminal anti-sigma domain) with SigI4.

Its subcellular location is the cell membrane. In terms of biological role, anti-sigma factor for SigI4. Negatively regulates SigI4 activity through direct interaction. Binding of the polysaccharide substrate to the extracellular C-terminal sensing domain of RsgI4 may induce a conformational change in its N-terminal cytoplasmic region, leading to the release and activation of SigI4. This is Anti-sigma-I factor RsgI4 from Acetivibrio thermocellus (strain ATCC 27405 / DSM 1237 / JCM 9322 / NBRC 103400 / NCIMB 10682 / NRRL B-4536 / VPI 7372) (Clostridium thermocellum).